We begin with the raw amino-acid sequence, 198 residues long: MSVKIENIQCELLSKNWFKLHKYTFDLKTDEGTSVQQIREVYDRGNGATILLYNRQQGTVVLIEQFRMPTYVNGNASGMLLEACAGLLDNDSPEACIRREAMEETGYQVDKVQKLFEAYMSPGGVTELVYFFAAEYHPDQKITDEVGVEDEVIEVVELPFHDALAMVADGRIKDGKTIMLLQYAQIHFFPSSLTPQRC.

Residues 38–40 (IRE), Arg-67, and 85–87 (AGL) each bind GDP-alpha-D-mannose. The 138-residue stretch at 43–180 (DRGNGATILL…RIKDGKTIML (138 aa)) folds into the Nudix hydrolase domain. Residues Ala-85, Glu-100, and Glu-104 each contribute to the Mg(2+) site. Positions 86-106 (GLLDNDSPEACIRREAMEETG) match the Nudix box motif. GDP-alpha-D-mannose is bound by residues Glu-104, Glu-127, 150–151 (DE), and Lys-176. Residue Glu-151 coordinates Mg(2+).

This sequence belongs to the Nudix hydrolase family. NudK subfamily. Homodimer. Mg(2+) serves as cofactor.

It carries out the reaction GDP-alpha-D-mannose + H2O = alpha-D-mannose 1-phosphate + GMP + 2 H(+). In terms of biological role, nucleoside diphosphate sugar hydrolase that hydrolyzes GDP-mannose as its preferred substrate, yielding GMP and mannose-1-phosphate. In Yersinia pseudotuberculosis serotype O:1b (strain IP 31758), this protein is GDP-mannose pyrophosphatase (nudK).